The following is a 208-amino-acid chain: dTTP/UTP pyrophosphatase (208 aa).

Asp78 serves as the catalytic Proton acceptor.

It belongs to the Maf family. YhdE subfamily. The cofactor is a divalent metal cation.

Its subcellular location is the cytoplasm. It carries out the reaction dTTP + H2O = dTMP + diphosphate + H(+). It catalyses the reaction UTP + H2O = UMP + diphosphate + H(+). Nucleoside triphosphate pyrophosphatase that hydrolyzes dTTP and UTP. May have a dual role in cell division arrest and in preventing the incorporation of modified nucleotides into cellular nucleic acids. This Maricaulis maris (strain MCS10) (Caulobacter maris) protein is dTTP/UTP pyrophosphatase.